We begin with the raw amino-acid sequence, 290 residues long: Protein CREG2 (290 aa).

Positions 1-31 are cleaved as a signal peptide; sequence MSVRRGRRPARPGTRLSWLLCCSALLSPAAG. Asparagine 165 and asparagine 166 each carry an N-linked (GlcNAc...) asparagine glycan.

Belongs to the CREG family. In terms of processing, it is not sure whether N-glycosylation is on Asn-165 and/or Asn-166. Brain specific mainly in the limbic system and faintly in the spinal cord but not in cerebellum.

It is found in the secreted. The chain is Protein CREG2 (CREG2) from Homo sapiens (Human).